Reading from the N-terminus, the 115-residue chain is Large ribosomal subunit protein bL20c (115 aa).

The protein belongs to the bacterial ribosomal protein bL20 family.

The protein resides in the plastid. Its subcellular location is the chloroplast. Its function is as follows. Binds directly to 23S ribosomal RNA and is necessary for the in vitro assembly process of the 50S ribosomal subunit. It is not involved in the protein synthesizing functions of that subunit. The chain is Large ribosomal subunit protein bL20c from Gnetum parvifolium (Small-leaved jointfir).